Consider the following 213-residue polypeptide: Putative 3-methyladenine DNA glycosylase (213 aa).

This sequence belongs to the DNA glycosylase MPG family.

The sequence is that of Putative 3-methyladenine DNA glycosylase from Corynebacterium jeikeium (strain K411).